The following is a 392-amino-acid chain: Probable inactive serine/threonine-protein kinase DDB_G0280855 (392 aa).

A Protein kinase domain is found at 46-349 (ITKKTIYACD…IERIIQHPYF (304 aa)). ATP contacts are provided by residues 52-60 (YACDINGTM) and K75.

This sequence belongs to the protein kinase superfamily. CMGC Ser/Thr protein kinase family. MAP kinase subfamily.

This chain is Probable inactive serine/threonine-protein kinase DDB_G0280855, found in Dictyostelium discoideum (Social amoeba).